The following is a 760-amino-acid chain: BMP/retinoic acid-inducible neural-specific protein 1 (760 aa).

The N-terminal stretch at 1 to 16 (MNWRFVELLYFLFVWG) is a signal peptide. Residues 68 to 251 (RYKIYREFAR…FVQSALSYIM (184 aa)) enclose the MACPF domain. Residues asparagine 156, asparagine 433, asparagine 443, asparagine 553, asparagine 599, asparagine 630, and asparagine 676 are each glycosylated (N-linked (GlcNAc...) asparagine).

It belongs to the BRINP family. As to expression, expressed in brain. Expressed in GABAergic neurons of the pre-frontal cortex. Weakly expressed in embryonic stem (ES) cells and in ES-derived neural stem cells (NSCs).

It localises to the cytoplasm. Functionally, plays a role in neurogenesis, brain development, and the functioning of GABAergic neurons. May suppress cell cycle progression in postmitotic neurons by inhibiting G1/S transition. In Mus musculus (Mouse), this protein is BMP/retinoic acid-inducible neural-specific protein 1 (Brinp1).